Consider the following 106-residue polypeptide: Urease subunit beta (106 aa).

The protein belongs to the urease beta subunit family. Heterotrimer of UreA (gamma), UreB (beta) and UreC (alpha) subunits. Three heterotrimers associate to form the active enzyme.

It localises to the cytoplasm. It catalyses the reaction urea + 2 H2O + H(+) = hydrogencarbonate + 2 NH4(+). The protein operates within nitrogen metabolism; urea degradation; CO(2) and NH(3) from urea (urease route): step 1/1. The chain is Urease subunit beta from Prochlorococcus marinus (strain MIT 9215).